The primary structure comprises 160 residues: MCHSRNHLHTMTGLRAPSPAPSTGPELRRGSGPEIFTFDPLPERAVVSTARLNTSRGHRKRSRRVLYPRVVRRQLPTEEPNIAKRVLFLLFAIIFCQILMAEEGVSQPLAPEDATSAVTPEPISAPITAPPVLEPLNLTSESSDYALDLKAFLQQHPAAF.

Residues 1-35 (MCHSRNHLHTMTGLRAPSPAPSTGPELRRGSGPEI) form a disordered region. Topologically, residues 1–85 (MCHSRNHLHT…PTEEPNIAKR (85 aa)) are cytoplasmic. Position 31 is a phosphoserine (S31). The helical; Signal-anchor for type II membrane protein transmembrane segment at 86–102 (VLFLLFAIIFCQILMAE) threads the bilayer. At 103-153 (EGVSQPLAPEDATSAVTPEPISAPITAPPVLEPLNLTSESSDYALDLKAFL) the chain is on the extracellular side. An N-linked (GlcNAc...) asparagine glycan is attached at N137.

The protein belongs to the IER3 family. In terms of assembly, interacts with the PPP2R5C-PP2A holoenzyme and ERK kinases; regulates ERK dephosphorylation. Glycosylated. Expressed predominantly in the lung, testes and the uterus.

It localises to the membrane. May play a role in the ERK signaling pathway by inhibiting the dephosphorylation of ERK by phosphatase PP2A-PPP2R5C holoenzyme. Also acts as an ERK downstream effector mediating survival. As a member of the NUPR1/RELB/IER3 survival pathway, may allow the development of pancreatic intraepithelial neoplasias. This Mus musculus (Mouse) protein is Radiation-inducible immediate-early gene IEX-1 (Ier3).